The sequence spans 122 residues: Nitrogen fixation nifHD region GlnB-like protein 2 (122 aa).

This sequence belongs to the P(II) protein family.

Could be involved in the regulation of nitrogen fixation. In Methanobacterium ivanovii, this protein is Nitrogen fixation nifHD region GlnB-like protein 2 (glnBB).